A 430-amino-acid polypeptide reads, in one-letter code: Proteinase-activated receptor 1 (430 aa).

The first 21 residues, Met-1–Ser-21, serve as a signal peptide directing secretion. Positions Ser-22–Arg-41 are cleaved as a propeptide — removed for receptor activation. The Extracellular segment spans residues Ser-42–Thr-107. Asn-67 and Asn-80 each carry an N-linked (GlcNAc...) asparagine glycan. Residues Leu-108–Val-133 traverse the membrane as a helical segment. Over Leu-134 to Ala-142 the chain is Cytoplasmic. Residues Val-143–Phe-162 traverse the membrane as a helical segment. Residues Lys-163–Arg-181 lie on the Extracellular side of the membrane. Cys-180 and Cys-259 are disulfide-bonded. The chain crosses the membrane as a helical span at residues Phe-182–Ile-203. Over Asp-204–Arg-223 the chain is Cytoplasmic. Residues Ala-224–Leu-244 traverse the membrane as a helical segment. Residues Lys-245–Ser-273 are Extracellular-facing. Residue Asn-255 is glycosylated (N-linked (GlcNAc...) asparagine). The helical transmembrane segment at Tyr-274–Val-293 threads the bilayer. Topologically, residues Cys-294–Ala-316 are cytoplasmic. The chain crosses the membrane as a helical span at residues Leu-317–Ile-339. Residues Val-340–Ala-354 lie on the Extracellular side of the membrane. Residues Tyr-355–Ala-379 traverse the membrane as a helical segment. Residues Ser-380 to Ala-430 lie on the Cytoplasmic side of the membrane. Phosphoserine is present on Ser-423.

The protein belongs to the G-protein coupled receptor 1 family. Post-translationally, proteolytic cleavage by thrombin generates a new N-terminus that functions as a tethered ligand. Also proteolytically cleaved by cathepsin CTSG. Phosphorylated in the C-terminal tail; probably mediating desensitization prior to the uncoupling and internalization of the receptor.

The protein resides in the cell membrane. Functionally, high affinity receptor that binds the activated thrombin, leading to calcium release from intracellular stores. The thrombin-activated receptor signaling pathway is mediated through PTX-insensitive G proteins, activation of phospholipase C resulting in the production of 1D-myo-inositol 1,4,5-trisphosphate (InsP3) which binds to InsP3 receptors causing calcium release from the stores. In astrocytes, the calcium released into the cytosol allows the Ca(2+)-dependent release of L-glutamate into the synaptic cleft through BEST1, that targets the neuronal postsynaptic GRIN2A/NMDAR receptor resulting in the synaptic plasticity regulation. May play a role in platelets activation and in vascular development. Mediates up-regulation of pro-inflammatory cytokines, such as MCP-1/CCL2 and IL6, triggered by coagulation factor Xa (F10) in cardiac fibroblasts and umbilical vein endothelial cells. This chain is Proteinase-activated receptor 1, found in Mus musculus (Mouse).